A 768-amino-acid polypeptide reads, in one-letter code: Pentatricopeptide repeat-containing protein At4g01030, mitochondrial (768 aa).

The transit peptide at 1-25 (MYRFLGLTIHGGLIKRGLDNSDTRV) directs the protein to the mitochondrion. PPR repeat units lie at residues 22 to 52 (DTRVVSASMGFYGRCVSLGFANKLFDEMPKR), 53 to 87 (DDLAWNEIVMVNLRSGNWEKAVELFREMQFSGAKA), 88 to 122 (YDSTMVKLLQVCSNKEGFAEGRQIHGYVLRLGLES), 123 to 153 (NVSMCNSLIVMYSRNGKLELSRKVFNSMKDR), 154 to 188 (NLSSWNSILSSYTKLGYVDDAIGLLDEMEICGLKP), 189 to 223 (DIVTWNSLLSGYASKGLSKDAIAVLKRMQIAGLKP), 224 to 254 (STSSISSLLQAVAEPGHLKLGKAIHGYILRN), 259 to 289 (DVYVETTLIDMYIKTGYLPYARMVFDMMDAK), 290 to 324 (NIVAWNSLVSGLSYACLLKDAEALMIRMEKEGIKP), 325 to 359 (DAITWNSLASGYATLGKPEKALDVIGKMKEKGVAP), 360 to 394 (NVVSWTAIFSGCSKNGNFRNALKVFIKMQEEGVGP), 395 to 429 (NAATMSTLLKILGCLSLLHSGKEVHGFCLRKNLIC), 430 to 460 (DAYVATALVDMYGKSGDLQSAIEIFWGIKNK), 461 to 495 (SLASWNCMLMGYAMFGRGEEGIAAFSVMLEAGMEP), 496 to 526 (DAITFTSVLSVCKNSGLVQEGWKYFDLMRSR), and 532 to 562 (TIEHCSCMVDLLGRSGYLDEAWDFIQTMSLK). The interval 567–642 (IWGAFLSSCK…QDLWSWIQID (76 aa)) is type E motif. Residues 643-673 (QTVHIFYAEGKTHPDEGDIYFELYKLVSEMK) are type E(+) motif. Residues 674-768 (KSGYVPDTSC…DGKCSCNDSW (95 aa)) are type DYW motif.

The protein belongs to the PPR family. PCMP-H subfamily.

The protein resides in the mitochondrion. In Arabidopsis thaliana (Mouse-ear cress), this protein is Pentatricopeptide repeat-containing protein At4g01030, mitochondrial (PCMP-H65).